We begin with the raw amino-acid sequence, 385 residues long: Enoyl-[acyl-carrier-protein] reductase, mitochondrial (385 aa).

Tyr-78 functions as the Proton donor in the catalytic mechanism. Residues Asn-162, 190 to 193 (TSGV), 213 to 215 (RDR), 288 to 291 (YGGM), 313 to 315 (YWV), and Lys-378 contribute to the NADP(+) site.

Belongs to the zinc-containing alcohol dehydrogenase family. Quinone oxidoreductase subfamily. In terms of assembly, homodimer.

The protein resides in the mitochondrion matrix. The enzyme catalyses a 2,3-saturated acyl-[ACP] + NADP(+) = a (2E)-enoyl-[ACP] + NADPH + H(+). Its function is as follows. Catalyzes the NADPH-dependent reduction of trans-2-enoyl thioesters in mitochondrial fatty acid synthesis (fatty acid synthesis type II). Fatty acid chain elongation in mitochondria uses acyl carrier protein (ACP) as an acyl group carrier, but the enzyme accepts both ACP and CoA thioesters as substrates in vitro. Required for respiration and the maintenance of the mitochondrial compartment. This is Enoyl-[acyl-carrier-protein] reductase, mitochondrial (ETR1) from Candida glabrata (strain ATCC 2001 / BCRC 20586 / JCM 3761 / NBRC 0622 / NRRL Y-65 / CBS 138) (Yeast).